We begin with the raw amino-acid sequence, 172 residues long: Small ribosomal subunit protein uS5 (172 aa).

Positions 15-78 constitute an S5 DRBM domain; sequence LNDKLIFINR…ANAKRNLSRI (64 aa).

It belongs to the universal ribosomal protein uS5 family. Part of the 30S ribosomal subunit. Contacts proteins S4 and S8.

Functionally, with S4 and S12 plays an important role in translational accuracy. Located at the back of the 30S subunit body where it stabilizes the conformation of the head with respect to the body. The chain is Small ribosomal subunit protein uS5 from Dehalococcoides mccartyi (strain ATCC BAA-2266 / KCTC 15142 / 195) (Dehalococcoides ethenogenes (strain 195)).